Reading from the N-terminus, the 297-residue chain is Probable terminal-alkyne amino-acid exporter (297 aa).

The next 9 membrane-spanning stretches (helical) occupy residues A6–V26, G32–A52, L65–W85, A95–G115, I123–A143, W150–L170, V178–V198, T212–A232, and V249–G269. EamA domains lie at A6 to A137 and W150 to N281.

Belongs to the EamA transporter family.

Its subcellular location is the cell membrane. In terms of biological role, probably involved in the export of terminal alkyne-containing amino acids, namely L-propargylglycine (Pra) and L-beta-ethynylserine, that are antibiotics synthesized by enzymes encoded in the same gene cluster. The polypeptide is Probable terminal-alkyne amino-acid exporter (Streptantibioticus cattleyicolor (strain ATCC 35852 / DSM 46488 / JCM 4925 / NBRC 14057 / NRRL 8057) (Streptomyces cattleya)).